A 1558-amino-acid polypeptide reads, in one-letter code: Calmodulin-regulated spectrin-associated protein 1-B (1558 aa).

In terms of domain architecture, Calponin-homology (CH) spans 231 to 346 (WYWKLVPVRY…FIAELFWWFE (116 aa)). 3 stretches are compositionally biased toward polar residues: residues 400–417 (VQNS…SGFS), 440–450 (ACRNRSNSLTQ), and 504–516 (ASTV…SHPG). 7 disordered regions span residues 400–464 (VQNS…SDKR), 504–523 (ASTV…VRRI), 551–585 (NDIT…SDSR), 602–675 (AKEK…APGQ), 737–790 (TKEL…VASG), 803–850 (QRFG…QNKD), and 943–968 (DRSK…SSSP). The segment covering 602-620 (AKEKSISLNKEEESGEGRQ) has biased composition (basic and acidic residues). Residues 643-658 (QTLNRTFTPNTSSEFE) are compositionally biased toward polar residues. Residues 737–772 (TKELHPDKKQHFEEEVESAKLREDMNVKEHEDKDGG) show a composition bias toward basic and acidic residues. 2 stretches are compositionally biased toward low complexity: residues 776-790 (SSPG…VASG) and 812-822 (RSSTSSSQRTT). Positions 849 to 887 (KDNANMLASELVQLHMQLEEKRRAIESQKKKMEILTARQ) form a coiled coil. The span at 943–955 (DRSKEAEEPEKAS) shows a compositional bias: basic and acidic residues. Positions 971-1004 (VEEEVDLNECNRSIELLNEAIGSIQQQMMQLSLQ) form a coiled coil. Disordered stretches follow at residues 1041-1131 (FVEP…TFHL), 1257-1293 (LRKQ…RREL), 1305-1344 (ELCE…KCPA), and 1360-1414 (LASV…ITST). The span at 1080-1090 (SSTPTPTDSPS) shows a compositional bias: low complexity. Residues 1106–1115 (DFVQSSVRSE) show a composition bias toward polar residues. Residues 1243–1303 (AFLLKQQRKA…IKQEYLRKKQ (61 aa)) are a coiled coil. Positions 1317-1328 (PKTKPKKQRLKS) are enriched in basic residues. The 135-residue stretch at 1421–1555 (GPKLFKEPSA…QAKRPAGPKK (135 aa)) folds into the CKK domain.

This sequence belongs to the CAMSAP1 family.

It is found in the cytoplasm. Its subcellular location is the cytoskeleton. Its function is as follows. Key microtubule-organizing protein that specifically binds the minus-end of non-centrosomal microtubules and regulates their dynamics and organization. Specifically recognizes growing microtubule minus-ends and stabilizes microtubules. Acts on free microtubule minus-ends that are not capped by microtubule-nucleating proteins or other factors and protects microtubule minus-ends from depolymerization. In contrast to camsap2 and camsap3, tracks along the growing tips of minus-end microtubules without significantly affecting the polymerization rate: binds at the very tip of the microtubules minus-end and acts as a minus-end tracking protein (-TIP) that dissociates from microtubules after allowing tubulin incorporation. Through interaction with spectrin may regulate neurite outgrowth. This is Calmodulin-regulated spectrin-associated protein 1-B (camsap1b) from Danio rerio (Zebrafish).